The sequence spans 321 residues: Ribose-phosphate pyrophosphokinase 1 (321 aa).

Mg(2+) is bound by residues D131, H133, D142, and D146.

It belongs to the ribose-phosphate pyrophosphokinase family.

The catalysed reaction is D-ribose 5-phosphate + ATP = 5-phospho-alpha-D-ribose 1-diphosphate + AMP + H(+). In Candida albicans (Yeast), this protein is Ribose-phosphate pyrophosphokinase 1 (PRS1).